The primary structure comprises 367 residues: Peptide chain release factor 2 (367 aa).

The residue at position 249 (glutamine 249) is an N5-methylglutamine.

It belongs to the prokaryotic/mitochondrial release factor family. Methylated by PrmC. Methylation increases the termination efficiency of RF2.

The protein resides in the cytoplasm. Peptide chain release factor 2 directs the termination of translation in response to the peptide chain termination codons UGA and UAA. In Thermotoga petrophila (strain ATCC BAA-488 / DSM 13995 / JCM 10881 / RKU-1), this protein is Peptide chain release factor 2.